The following is a 185-amino-acid chain: MGNTLSIFGKLFDGLFGKKEMRILMVGLDAAGKTTILYKLKLGEVVTTIPTIGFNVETVEYKNIQFTVWDVGGQDKIRPLWRHYFQNTQGIIFVVDSNDRDRVVEAREELQRMLNEDELRDALLLVFANKQDLPNAMNAAEITDKLGLSSLRQRSWYIQATCATTGDGLFEGLDWLSTELKKKSP.

G2 carries N-myristoyl glycine lipidation. Residues 27–34 (GLDAAGKT), 70–74 (DVGGQ), and 129–132 (NKQD) contribute to the GTP site.

The protein belongs to the small GTPase superfamily. Arf family.

Its subcellular location is the golgi apparatus. Its function is as follows. GTP-binding protein involved in protein trafficking; may modulate vesicle budding and uncoating within the Golgi apparatus. In Neurospora crassa (strain ATCC 24698 / 74-OR23-1A / CBS 708.71 / DSM 1257 / FGSC 987), this protein is ADP-ribosylation factor.